The sequence spans 343 residues: Methylthioribose-1-phosphate isomerase (343 aa).

Substrate-binding positions include 48–50 (RGA), R88, and Q193. Catalysis depends on D234, which acts as the Proton donor. Residue 244–245 (NK) participates in substrate binding.

Belongs to the eIF-2B alpha/beta/delta subunits family. MtnA subfamily.

It catalyses the reaction 5-(methylsulfanyl)-alpha-D-ribose 1-phosphate = 5-(methylsulfanyl)-D-ribulose 1-phosphate. The protein operates within amino-acid biosynthesis; L-methionine biosynthesis via salvage pathway; L-methionine from S-methyl-5-thio-alpha-D-ribose 1-phosphate: step 1/6. Catalyzes the interconversion of methylthioribose-1-phosphate (MTR-1-P) into methylthioribulose-1-phosphate (MTRu-1-P). The polypeptide is Methylthioribose-1-phosphate isomerase (Thermotoga maritima (strain ATCC 43589 / DSM 3109 / JCM 10099 / NBRC 100826 / MSB8)).